The sequence spans 483 residues: Essential nuclear protein 1 (483 aa).

Disordered stretches follow at residues 1–21 (MARA…LKDL), 33–55 (KKKL…GYID), 67–123 (KEQQ…EGDY), and 171–200 (ESQV…GLKS). A compositionally biased stretch (acidic residues) spans 96–123 (YDDEDEDEDEDEEAFGEDISDFEPEGDY). Serine 172 is modified (phosphoserine; by ATM or ATR). The segment covering 174 to 183 (VEDMQDDEPL) has biased composition (acidic residues). The span at 185-198 (NEQNTSRGNISSGL) shows a compositional bias: polar residues. Residues serine 190 and serine 404 each carry the phosphoserine modification.

Belongs to the bystin family.

It is found in the cytoplasm. It localises to the nucleus. The protein resides in the nucleolus. In terms of biological role, required for normal export of the pre-40S particles from the nucleus to the cytoplasm. Its subcellular location and association with pre-40S subunit shifts from mixed cytoplasm/nucleus to all nuclear in RPS19 disruptions, suggesting it acts after the ribosomal protein. The protein is Essential nuclear protein 1 (ENP1) of Saccharomyces cerevisiae (strain ATCC 204508 / S288c) (Baker's yeast).